A 31-amino-acid polypeptide reads, in one-letter code: Cyclotide cter-D (31 aa).

Positions 1 to 31 form a cross-link, cyclopeptide (Gly-Asn); it reads GIPCAESCVWIPCTVTALLGCSCKDKVCYLN. 3 disulfide bridges follow: C4–C21, C8–C23, and C13–C28.

Post-translationally, contains 3 disulfide bonds. This is a cyclic peptide. As to expression, expressed in root, seed and nodule but not in flower, stem, shoot, leaf and pod.

Probably participates in a plant defense mechanism. This chain is Cyclotide cter-D, found in Clitoria ternatea (Butterfly pea).